The chain runs to 788 residues: Protocadherin beta-18 (788 aa).

The signal sequence occupies residues 1 to 28; sequence MEPGKGRAQPTRQVLLFFVFLGGSLVYS. Cadherin domains lie at 29–133, 134–242, 243–347, 348–452, and 453–562; these read ETWS…TPTF, LNNH…APEF, EKPV…PPEI, AMTS…APAF, and TQTS…SPFV. Residues 29-691 lie on the Extracellular side of the membrane; that stretch reads ETWSYSIAEE…AQADSLTVYL (663 aa). The N-linked (GlcNAc...) asparagine glycan is linked to asparagine 169. Residues asparagine 419 and asparagine 437 are each glycosylated (N-linked (GlcNAc...) asparagine). Residue asparagine 568 is glycosylated (N-linked (GlcNAc...) asparagine). The 104-residue stretch at 569 to 672 folds into the Cadherin 6 domain; sequence GSAPCTELVP…LVDGFSQPYL (104 aa). A helical transmembrane segment spans residues 692 to 712; it reads VVALASVSSLFLFSVFLFVAV. The Cytoplasmic segment spans residues 713 to 788; the sequence is RLCRRSRAAS…DSDMEKAPPF (76 aa).

Its subcellular location is the cell membrane. Its function is as follows. Potential calcium-dependent cell-adhesion protein. The chain is Protocadherin beta-18 (PCDHB18) from Pan troglodytes (Chimpanzee).